The chain runs to 333 residues: Taste receptor type 2 member 38 (333 aa).

Residues 1–17 lie on the Extracellular side of the membrane; sequence MLTLTRICAVSYEVRST. Residues 18–38 traverse the membrane as a helical segment; sequence FLFISVLEFAVGFLTNAFIFL. Residues 39–55 are Cytoplasmic-facing; it reads VNFWDVVKRQPLSNSDC. A helical membrane pass occupies residues 56 to 76; sequence VLLCLSISRLFLHGLLFLSAI. The Extracellular portion of the chain corresponds to 77–94; the sequence is QLTHFQKLSEPLNHSYQA. The helical transmembrane segment at 95–115 threads the bilayer; that stretch reads IIMLWIIANQANLWLAACLSL. Topologically, residues 116–142 are cytoplasmic; sequence LYCSKLIRFSHTFLICLASWVSRKISQ. Residues 143 to 163 traverse the membrane as a helical segment; it reads MLLGIILCSCICTVLCVWCFF. Residues 164–190 are Extracellular-facing; sequence SRPHFTVTTFLFMNNNTRLNWQIKDLN. Residue N178 is glycosylated (N-linked (GlcNAc...) asparagine). The helical transmembrane segment at 191 to 211 threads the bilayer; the sequence is LFYSFLFCYLWSVPPFLLFLV. Residues 212 to 251 are Cytoplasmic-facing; that stretch reads SSGMLTVSLGRHMRTMKVYTRDSRDPSLEAHIKALKSLVS. Residues 252–272 form a helical membrane-spanning segment; that stretch reads FFCFFVISSCAAFISVPLLIL. The Extracellular segment spans residues 273-276; that stretch reads WRNK. A helical transmembrane segment spans residues 277–297; it reads IGVMVCVGIMAACPSGHAAVL. Residues 298–333 are Cytoplasmic-facing; the sequence is ISGNATLRRAVTTILLWAQSSMKVRADHKADSRTLC.

This sequence belongs to the G-protein coupled receptor T2R family.

The protein localises to the membrane. In terms of biological role, receptor that may play a role in the perception of bitterness and is gustducin-linked. May play a role in sensing the chemical composition of the gastrointestinal content. The activity of this receptor may stimulate alpha gustducin, mediate PLC-beta-2 activation and lead to the gating of TRPM5. The protein is Taste receptor type 2 member 38 (TAS2R38) of Pongo pygmaeus (Bornean orangutan).